A 469-amino-acid polypeptide reads, in one-letter code: Tubulin gamma-2 chain (469 aa).

142–148 lines the GTP pocket; it reads AGGTGSG.

Belongs to the tubulin family.

The protein resides in the cytoplasm. Its subcellular location is the cytoskeleton. It localises to the microtubule organizing center. Its function is as follows. Tubulin is the major constituent of microtubules. The gamma chain is found at microtubule organizing centers (MTOC) such as the spindle poles, suggesting that it is involved in the minus-end nucleation of microtubule assembly. The polypeptide is Tubulin gamma-2 chain (TUBG2) (Zea mays (Maize)).